The sequence spans 1057 residues: Collagen alpha-1(I) chain (1057 aa).

Glutamine 1 is modified (pyrrolidone carboxylic acid). A compositionally biased stretch (basic and acidic residues) spans 1–10 (QLSYGYDEKS). Positions 1-17 (QLSYGYDEKSAGGISVP) are nonhelical region (N-terminal). The tract at residues 1-1057 (QLSYGYDEKS…AHDGGRYYRA (1057 aa)) is disordered. An Allysine modification is found at lysine 9. Serine 10 carries the post-translational modification Phosphoserine. 4 consecutive Collagen-like domains span residues 18–76 (GPMG…EAGK), 75–134 (GKPG…PGEN), 135–193 (GAPG…AKGE), and 195–252 (GPQG…GFPG). The triple-helical region stretch occupies residues 18–1031 (GPMGPSGPRG…PGPPGPPGPP (1014 aa)). 4-hydroxyproline occurs at positions 29, 32, 35, 44, 47, 50, 65, 80, 86, 95, and 101. Low complexity predominate over residues 37 to 56 (PQGFQGPPGEPGEPGASGPM). Positions 68 to 82 (NGDDGEAGKPGRPGE) are enriched in basic and acidic residues. The residue at position 104 (lysine 104) is a 5-hydroxylysine; alternate. Lysine 104 carries an O-linked (Gal...) hydroxylysine; alternate glycan. Serine 110 is subject to Phosphoserine. Residues 118 to 134 (DAGPAGPKGEPGSPGEN) are compositionally biased toward low complexity. A 4-hydroxyproline mark is found at proline 128, proline 131, proline 137, proline 146, and proline 152. Residues 157 to 170 (PAGARGNDGATGAA) show a composition bias toward low complexity. Residues 172–184 (PPGPTGPAGPPGF) are compositionally biased toward pro residues. 4-hydroxyproline is present on residues proline 173, proline 182, proline 185, proline 212, proline 215, proline 227, proline 233, proline 242, proline 248, proline 251, and proline 266. A compositionally biased stretch (low complexity) spans 218–269 (AGAAGPAGNPGADGQPGAKGANGAPGIAGAPGFPGARGPAGPQGPSGAPGPK). A 5-hydroxylysine modification is found at lysine 269. A 4-hydroxyproline mark is found at proline 275, proline 278, proline 290, proline 292, proline 299, proline 314, proline 320, proline 323, proline 329, and proline 335. Residues 287–296 (KGEPGPIGIQ) show a composition bias toward low complexity. Gly residues predominate over residues 324–333 (GERGGPGSRG). Residue lysine 344 is modified to 5-hydroxylysine. 4-hydroxyproline occurs at positions 353, 362, 368, 374, 383, 386, 395, 404, 410, 422, 431, 440, 443, 461, 479, 485, 491, 497, 503, 509, 521, 530, 542, 554, 557, 563, 569, and 578. Low complexity predominate over residues 377-403 (KGLTGSPGSPGPDGKTGPPGPAGQDGR). The span at 412 to 431 (ARGQAGVMGFPGPKGAAGEP) shows a compositional bias: low complexity. Over residues 473–500 (QGPAGSPGFQGLPGPAGPPGEAGKPGEQ) the composition is skewed to low complexity. Collagen-like domains follow at residues 522–579 (GERG…GLPG) and 555–613 (GAPG…PPGP). Low complexity predominate over residues 539 to 566 (NGAPGNDGAKGDAGAPGAPGSQGAPGLQ). Lysine 590 carries the post-translational modification 5-hydroxylysine. 4-hydroxyproline is present on residues proline 596, proline 611, and proline 617. Collagen-like domains follow at residues 618–676 (GDKG…AKGD) and 678–736 (GPPG…PPGP). The segment covering 623–637 (AGPSGPAGPTGARGA) has biased composition (low complexity). Serine 626 is subject to Phosphoserine. Proline 638, proline 644, proline 647, proline 656, proline 662, proline 680, proline 689, and proline 698 each carry 4-hydroxyproline. The span at 650 to 677 (AGFAGPPGADGQPGAKGEPGDAGAKGDA) shows a compositional bias: low complexity. 5-hydroxylysine is present on lysine 701. Over residues 706–722 (SAGPPGATGFPGAAGRV) the composition is skewed to low complexity. 4-hydroxyproline occurs at positions 710 and 716. Position 724 is a 3-hydroxyproline (proline 724). Proline 725, proline 734, proline 737, proline 758, proline 764, proline 767, proline 776, and proline 785 each carry 4-hydroxyproline. Residues 751-760 (ETGPAGRPGE) are compositionally biased toward low complexity. The segment covering 770-785 (AGEKGSPGADGPAGAP) has biased composition (low complexity). Positions 789-798 (GPQGIGGQRG) are enriched in gly residues. A 4-hydroxyproline mark is found at proline 803, proline 812, proline 815, proline 821, proline 836, proline 842, proline 848, proline 857, proline 863, and proline 869. Residues 804–861 (GQRGERGFPGLPGPSGEPGKQGPSGSSGERGPPGPAGPPGLAGPPGESGREGAPGAEG) form the Collagen-like 9 domain. Pro residues predominate over residues 835–845 (PPGPAGPPGLA). Lysine 872 carries the 5-hydroxylysine modification. Pro residues predominate over residues 881–896 (SGPPGAPGAPGAPGPV). 4-hydroxyproline is present on residues proline 884, proline 887, and proline 890. Positions 917 to 931 (AGPAGVRGPAGPQGP) are enriched in low complexity. 2 Collagen-like domains span residues 918 to 976 (GPAG…ASGP) and 972 to 1030 (GASG…PPGP). Residues 932 to 946 (RGDKGETGEQGDRGL) are compositionally biased toward basic and acidic residues. 5-hydroxylysine is present on lysine 935. 5-hydroxylysine; alternate is present on lysine 947. Lysine 947 is a glycosylation site (O-linked (Gal...) hydroxylysine; alternate). Proline 959, proline 962, proline 965, proline 983, proline 998, and proline 1001 each carry 4-hydroxyproline. Positions 965–997 (PGEQGPSGASGPAGPRGPPGSAGAPGKDGLNGL) are enriched in low complexity. Residue proline 1003 is modified to 3-hydroxyproline. Proline 1004 is modified (4-hydroxyproline). The span at 1016-1031 (VGPPGPPGPPGPPGPP) shows a compositional bias: pro residues. Proline 1018 is subject to 3-hydroxyproline. Proline 1019 is subject to 4-hydroxyproline. A 3-hydroxyproline modification is found at proline 1021. Proline 1022 bears the 4-hydroxyproline mark. Proline 1024 carries the 3-hydroxyproline modification. 3 positions are modified to 4-hydroxyproline: proline 1025, proline 1028, and proline 1031. Residues 1032–1055 (SGAFDFSFLPQPPQEKAHDGGRYY) are nonhelical region (C-terminal). Residues 1046–1057 (EKAHDGGRYYRA) are compositionally biased toward basic and acidic residues. At lysine 1047 the chain carries Allysine.

The protein belongs to the fibrillar collagen family. Trimers of one alpha 2(I) and two alpha 1(I) chains. In terms of processing, contains mostly 4-hydroxyproline. Proline residues at the third position of the tripeptide repeating unit (G-X-Y) are hydroxylated in some or all of the chains. Post-translationally, contains 3-hydroxyproline at a few sites. This modification occurs on the first proline residue in the sequence motif Gly-Pro-Hyp, where Hyp is 4-hydroxyproline. Lysine residues at the third position of the tripeptide repeating unit (G-X-Y) are 5-hydroxylated in some or all of the chains. In terms of processing, O-glycosylated on hydroxylated lysine residues. The O-linked glycan consists of a Glc-Gal disaccharide.

Its subcellular location is the secreted. The protein resides in the extracellular space. The protein localises to the extracellular matrix. Functionally, type I collagen is a member of group I collagen (fibrillar forming collagen). This chain is Collagen alpha-1(I) chain (COL1A1), found in Mammut americanum (American mastodon).